The following is a 234-amino-acid chain: Ribosomal RNA small subunit methyltransferase G (234 aa).

S-adenosyl-L-methionine-binding positions include G96, L101, 119–121 (DAT), 147–148 (VE), and R161.

It belongs to the methyltransferase superfamily. RNA methyltransferase RsmG family.

It is found in the cytoplasm. Specifically methylates the N7 position of a guanine in 16S rRNA. This is Ribosomal RNA small subunit methyltransferase G from Chlorobium chlorochromatii (strain CaD3).